Here is a 3603-residue protein sequence, read N- to C-terminus: Plipastatin synthase subunit D (3603 aa).

Residues 7 to 306 (IQDIYPLSYM…NTMPVRVQGA (300 aa)) form a condensation 1 region. The domain 1 (proline-activating) stretch occupies residues 7–1043 (IQDIYPLSYM…ALIIREAEQN (1037 aa)). The tract at residues 490–889 (TYRELNKAAN…NHPDISEAAI (400 aa)) is adenylation 1. The region spanning 966–1041 (APRNLLEAKL…GLALIIREAE (76 aa)) is the Carrier 1 domain. Ser1001 is subject to O-(pantetheine 4'-phosphoryl)serine. Residues 1053–1334 (KRDTYPVSSA…NTLALRTRPA (282 aa)) form a condensation 2 region. The interval 1053–2069 (KRDTYPVSSA…TVEGLATVIR (1017 aa)) is domain 2 (glutamine-activating). Positions 1521–1924 (TYKELNEQAN…SIEGVREAAV (404 aa)) are adenylation 2. One can recognise a Carrier 2 domain in the interval 1997–2072 (APRNVTEMKL…GLATVIREGT (76 aa)). O-(pantetheine 4'-phosphoryl)serine is present on Ser2032. Residues 2084–2374 (KQETYPVSSA…NTLALRTRPE (291 aa)) form a condensation 3 region. The segment at 2084-3596 (KQETYPVSSA…ELTEDALQEI (1513 aa)) is domain 3 (proline-activating). The tract at residues 2560-2956 (TYQELDEWSN…CIKGVKDAAV (397 aa)) is adenylation 3. The Carrier 3 domain occupies 3034 to 3108 (PPSSKMEQIL…ELAAYIRDSD (75 aa)). Ser3069 is modified (O-(pantetheine 4'-phosphoryl)serine). Residues 3116–3596 (VEGDVQWSPV…ELTEDALQEI (481 aa)) form an epimerization region.

Belongs to the ATP-dependent AMP-binding enzyme family. It depends on pantetheine 4'-phosphate as a cofactor.

In terms of biological role, this protein is a multifunctional enzyme, able to activate and polymerize the amino acids Pro, Gln and Tyr as part of the biosynthesis of the lipopeptide antibiotic plipastatin. The Tyr residue is further epimerized to the D-isomer form. The activation sites for these amino acids consist of individual domains. The protein is Plipastatin synthase subunit D (ppsD) of Bacillus subtilis (strain 168).